We begin with the raw amino-acid sequence, 365 residues long: Geranylgeranyl pyrophosphate synthase (365 aa).

Residues 1–11 (MKPLPSTNGKV) show a composition bias toward polar residues. The disordered stretch occupies residues 1–36 (MKPLPSTNGKVNGNGKHHDSSLSSTSSTSSSSSSDT). The span at 21-34 (SLSSTSSTSSSSSS) shows a compositional bias: low complexity. The isopentenyl diphosphate site is built by Lys78, Arg81, and His110. Mg(2+) is bound by residues Asp117 and Asp121. Dimethylallyl diphosphate is bound at residue Arg126. Residue Arg127 participates in isopentenyl diphosphate binding. Positions 211, 212, and 247 each coordinate dimethylallyl diphosphate. Asp250 is a binding site for Mg(2+). Positions 254, 263, and 273 each coordinate dimethylallyl diphosphate.

The protein belongs to the FPP/GGPP synthase family. Mg(2+) is required as a cofactor.

The catalysed reaction is isopentenyl diphosphate + dimethylallyl diphosphate = (2E)-geranyl diphosphate + diphosphate. It catalyses the reaction isopentenyl diphosphate + (2E)-geranyl diphosphate = (2E,6E)-farnesyl diphosphate + diphosphate. The enzyme catalyses isopentenyl diphosphate + (2E,6E)-farnesyl diphosphate = (2E,6E,10E)-geranylgeranyl diphosphate + diphosphate. In terms of biological role, geranylgeranyl pyrophosphate synthase that catalyzes the trans-addition of the three molecules of IPP onto DMAPP to form geranylgeranyl pyrophosphate. Does not show any monoterpene nor sesquiterpene synthase activity. This Melampsora lini (Rust fungus) protein is Geranylgeranyl pyrophosphate synthase.